The sequence spans 268 residues: DNA repair protein RecO (268 aa).

The protein belongs to the RecO family.

Its function is as follows. Involved in DNA repair and RecF pathway recombination. The polypeptide is DNA repair protein RecO (Parasynechococcus marenigrum (strain WH8102)).